The following is a 73-amino-acid chain: Ocellatin-PT6 (73 aa).

A signal peptide spans 1 to 22 (MAFLKKSLFLVLFLGLVSLSIC). The propeptide occupies 23–39 (DEEKRQDEDDDDDDDEE).

Expressed by the skin glands.

It is found in the secreted. Functionally, has antibacterial activity against Gram-negative bacterium E.coli ATCC 25922 (MIC=120 uM) but not against S.pneumoniae ATCC 700603, S.choleraesuis ATCC 14028 or against Gram-positive bacterium S.aureus ATCC 29313. Shows no hemolytic activity and no cytotoxicity. In Leptodactylus pustulatus (Ceara white-lipped frog), this protein is Ocellatin-PT6.